The primary structure comprises 105 residues: U2-lycotoxin-Ls1d (105 aa).

The N-terminal stretch at methionine 1–serine 17 is a signal peptide. Positions phenylalanine 18–arginine 41 are excised as a propeptide. Disulfide bonds link cysteine 51-cysteine 67, cysteine 58-cysteine 97, cysteine 60-cysteine 83, and cysteine 69-cysteine 81.

Belongs to the neurotoxin 04 (omega-agtx) family. 01 (type I omega-agtx) subfamily. In terms of tissue distribution, expressed by the venom gland.

Its subcellular location is the secreted. Insecticidal to house crickets. It induces an excitatory slow-onset impact that leads to irreversible spastic paralysis. It also modifies human voltage-gated potassium channel Kv1.5/KCNA5. Most likely, it binds to the voltage-sensing domain of the channel, suggesting it does not block the pore but prevents its opening at physiological membrane potentials. The recombinant peptide binds to the channel in an irreversible manner and slows down the hKv1.5 current activation kinetics. It is not toxic to mice, when intracranially injected (at 0.5 ug/g mouse). This Lycosa singoriensis (Wolf spider) protein is U2-lycotoxin-Ls1d.